The sequence spans 449 residues: Exodeoxyribonuclease 7 large subunit (449 aa).

It belongs to the XseA family. As to quaternary structure, heterooligomer composed of large and small subunits.

The protein resides in the cytoplasm. It catalyses the reaction Exonucleolytic cleavage in either 5'- to 3'- or 3'- to 5'-direction to yield nucleoside 5'-phosphates.. Bidirectionally degrades single-stranded DNA into large acid-insoluble oligonucleotides, which are then degraded further into small acid-soluble oligonucleotides. This Latilactobacillus sakei subsp. sakei (strain 23K) (Lactobacillus sakei subsp. sakei) protein is Exodeoxyribonuclease 7 large subunit.